A 577-amino-acid polypeptide reads, in one-letter code: Arginine--tRNA ligase (577 aa).

The 'HIGH' region signature appears at 122–132; it reads PNVAKEMHVGH.

The protein belongs to the class-I aminoacyl-tRNA synthetase family. As to quaternary structure, monomer.

The protein resides in the cytoplasm. The catalysed reaction is tRNA(Arg) + L-arginine + ATP = L-arginyl-tRNA(Arg) + AMP + diphosphate. In Escherichia coli O157:H7 (strain EC4115 / EHEC), this protein is Arginine--tRNA ligase.